Here is a 448-residue protein sequence, read N- to C-terminus: Exodeoxyribonuclease 7 large subunit (448 aa).

This sequence belongs to the XseA family. Heterooligomer composed of large and small subunits.

The protein localises to the cytoplasm. The enzyme catalyses Exonucleolytic cleavage in either 5'- to 3'- or 3'- to 5'-direction to yield nucleoside 5'-phosphates.. Functionally, bidirectionally degrades single-stranded DNA into large acid-insoluble oligonucleotides, which are then degraded further into small acid-soluble oligonucleotides. In Exiguobacterium sp. (strain ATCC BAA-1283 / AT1b), this protein is Exodeoxyribonuclease 7 large subunit.